A 199-amino-acid chain; its full sequence is Large ribosomal subunit protein bL25 (199 aa).

It belongs to the bacterial ribosomal protein bL25 family. CTC subfamily. As to quaternary structure, part of the 50S ribosomal subunit; part of the 5S rRNA/L5/L18/L25 subcomplex. Contacts the 5S rRNA. Binds to the 5S rRNA independently of L5 and L18.

This is one of the proteins that binds to the 5S RNA in the ribosome where it forms part of the central protuberance. The chain is Large ribosomal subunit protein bL25 from Pelobacter propionicus (strain DSM 2379 / NBRC 103807 / OttBd1).